We begin with the raw amino-acid sequence, 109 residues long: Large ribosomal subunit protein uL24 (109 aa).

The protein belongs to the universal ribosomal protein uL24 family. In terms of assembly, part of the 50S ribosomal subunit.

In terms of biological role, one of two assembly initiator proteins, it binds directly to the 5'-end of the 23S rRNA, where it nucleates assembly of the 50S subunit. Its function is as follows. One of the proteins that surrounds the polypeptide exit tunnel on the outside of the subunit. The polypeptide is Large ribosomal subunit protein uL24 (Desulforapulum autotrophicum (strain ATCC 43914 / DSM 3382 / VKM B-1955 / HRM2) (Desulfobacterium autotrophicum)).